We begin with the raw amino-acid sequence, 558 residues long: uncharacterized protein (558 aa).

In terms of domain architecture, DhaL spans 7 to 206 (SNFIDMLRLG…FACFLEGMLS (200 aa)).

This is an uncharacterized protein from Mycoplasma pneumoniae (strain ATCC 29342 / M129 / Subtype 1) (Mycoplasmoides pneumoniae).